A 668-amino-acid polypeptide reads, in one-letter code: Penicillin-binding protein 3 (668 aa).

A helical membrane pass occupies residues 7–23 (LLVFLCVGLIGLIGCSK). Serine 410 functions as the Acyl-ester intermediate in the catalytic mechanism.

It belongs to the transpeptidase family.

Its subcellular location is the cell membrane. It localises to the forespore inner membrane. The protein localises to the forespore outer membrane. It is found in the membrane raft. It carries out the reaction Preferential cleavage: (Ac)2-L-Lys-D-Ala-|-D-Ala. Also transpeptidation of peptidyl-alanyl moieties that are N-acyl substituents of D-alanine.. It participates in cell wall biogenesis; peptidoglycan biosynthesis. In terms of biological role, penicillin-binding proteins (PBPs) function in the late steps of murein biosynthesis. Probably required for both cortical and vegetative peptidoglycan synthesis. Although not usually required for cell division, in the absence of PBP 2B (pbpB) it becomes essential. Confers resistance to oxacillin and cephalexin. The protein is Penicillin-binding protein 3 of Bacillus subtilis (strain 168).